An 858-amino-acid chain; its full sequence is Leucine--tRNA ligase (858 aa).

The short motif at 42 to 52 is the 'HIGH' region element; that stretch reads PYPSGRLHMGH. Residues 618–622 carry the 'KMSKS' region motif; sequence KMSKS. Lys-621 provides a ligand contact to ATP.

This sequence belongs to the class-I aminoacyl-tRNA synthetase family.

It localises to the cytoplasm. It carries out the reaction tRNA(Leu) + L-leucine + ATP = L-leucyl-tRNA(Leu) + AMP + diphosphate. The chain is Leucine--tRNA ligase from Photobacterium profundum (strain SS9).